The chain runs to 627 residues: MIRYTVAGHSRRCVVGASKRVGAIKCITVAATKRFISNKSNEVFTKLTNDNDPKRDAFFKYTWGSWLKNDKQEKEKRFTKFSIEGLNRILNDIYIQSNEMAKAPDGKILPPVFNKNLTVSLVNNVVPKNIGKINPNEKVQVTTLSSIHEGKHHRIYKVDTNLNKAFILRIPYPLENENTLSYRIRSEVATMDFADLKLGIKVPKIFCYGVNSLNPVRQPFVLQEFIEGELLMKDWDPLIEDGSSNQKKYDNVIKQVSDFQSKLVSLKLNAFGSIYFNNDLKDGNEKEFVKEDIYDGETNPDLQNRWKIGPSVERCLWRHKSHLDFHKQMKPFLGPWPKKSPMDIIKNTGLLEAENAKTRIAMKEAGSSAELMYPRTLKEQITTYENLAKIAPDLFNVKTKAIPNMQELLSPRLFHPDLDPMNIIVNKEAQEAYLLDFEGACTKPFILQNSPQFIAYDGPKIYDLKEDITDFDKLSEAEKVQYQFMYKRTRNQHQWEKKLNDNNPKLITAVAPPVKLLRSPYIAAVERKTEEEYLLIDESLLQLKEVWDIFAQNDLVNQKKFPLNYSKEDIERHVEDLQKLHEKLISTPFAATQGWIPQDMFDQLLNSGSIVKQENGDYTVKQPEATK.

The transit peptide at 1 to 43 directs the protein to the mitochondrion; that stretch reads MIRYTVAGHSRRCVVGASKRVGAIKCITVAATKRFISNKSNEV.

It belongs to the AIM9 family.

The protein localises to the mitochondrion. This Saccharomyces cerevisiae (strain JAY291) (Baker's yeast) protein is Altered inheritance of mitochondria protein 9, mitochondrial (AIM9).